Consider the following 101-residue polypeptide: Small ribosomal subunit protein bS6 (101 aa).

The protein belongs to the bacterial ribosomal protein bS6 family.

Its function is as follows. Binds together with bS18 to 16S ribosomal RNA. The chain is Small ribosomal subunit protein bS6 from Nitratidesulfovibrio vulgaris (strain DSM 19637 / Miyazaki F) (Desulfovibrio vulgaris).